A 273-amino-acid polypeptide reads, in one-letter code: 2,3,4,5-tetrahydropyridine-2,6-dicarboxylate N-succinyltransferase (273 aa).

Residues Arg-105 and Asp-142 each coordinate substrate.

This sequence belongs to the transferase hexapeptide repeat family. Homotrimer.

The protein localises to the cytoplasm. The enzyme catalyses (S)-2,3,4,5-tetrahydrodipicolinate + succinyl-CoA + H2O = (S)-2-succinylamino-6-oxoheptanedioate + CoA. The protein operates within amino-acid biosynthesis; L-lysine biosynthesis via DAP pathway; LL-2,6-diaminopimelate from (S)-tetrahydrodipicolinate (succinylase route): step 1/3. This Bordetella parapertussis (strain 12822 / ATCC BAA-587 / NCTC 13253) protein is 2,3,4,5-tetrahydropyridine-2,6-dicarboxylate N-succinyltransferase.